We begin with the raw amino-acid sequence, 289 residues long: 4-diphosphocytidyl-2-C-methyl-D-erythritol kinase (289 aa).

K10 is a catalytic residue. 95–105 (PVSAGMGGGSA) is an ATP binding site. D137 is a catalytic residue.

This sequence belongs to the GHMP kinase family. IspE subfamily.

It catalyses the reaction 4-CDP-2-C-methyl-D-erythritol + ATP = 4-CDP-2-C-methyl-D-erythritol 2-phosphate + ADP + H(+). The protein operates within isoprenoid biosynthesis; isopentenyl diphosphate biosynthesis via DXP pathway; isopentenyl diphosphate from 1-deoxy-D-xylulose 5-phosphate: step 3/6. Catalyzes the phosphorylation of the position 2 hydroxy group of 4-diphosphocytidyl-2C-methyl-D-erythritol. This is 4-diphosphocytidyl-2-C-methyl-D-erythritol kinase from Ligilactobacillus salivarius (strain UCC118) (Lactobacillus salivarius).